Consider the following 383-residue polypeptide: Processive diacylglycerol beta-glucosyltransferase (383 aa).

It belongs to the glycosyltransferase 28 family. UgtP subfamily.

It localises to the cell membrane. It carries out the reaction a 1,2-diacyl-3-O-(beta-D-glucopyranosyl)-sn-glycerol + UDP-alpha-D-glucose = a 1,2-diacyl-3-O-(beta-D-Glc-(1-&gt;6)-beta-D-Glc)-sn-glycerol + UDP + H(+). It catalyses the reaction a 1,2-diacyl-3-O-(beta-D-Glc-(1-&gt;6)-beta-D-Glc)-sn-glycerol + UDP-alpha-D-glucose = a 1,2-diacyl-3-O-(beta-D-Glc-(1-&gt;6)-beta-D-Glc-(1-&gt;6)-beta-D-Glc)-sn-glycerol + UDP + H(+). The enzyme catalyses a 1,2-diacyl-sn-glycerol + UDP-alpha-D-glucose = a 1,2-diacyl-3-O-(beta-D-glucopyranosyl)-sn-glycerol + UDP + H(+). The protein operates within glycolipid metabolism; diglucosyl-diacylglycerol biosynthesis. Processive glucosyltransferase involved in the biosynthesis of both the bilayer- and non-bilayer-forming membrane glucolipids. Is able to successively transfer up to three glucosyl residues to diacylglycerol (DAG), thereby catalyzing the formation of beta-monoglucosyl-DAG (3-O-(beta-D-glucopyranosyl)-1,2-diacyl-sn-glycerol), beta-diglucosyl-DAG (3-O-(beta-D-glucopyranosyl-beta-(1-&gt;6)-D-glucopyranosyl)-1,2-diacyl-sn-glycerol) and beta-triglucosyl-DAG (3-O-(beta-D-glucopyranosyl-beta-(1-&gt;6)-D-glucopyranosyl-beta-(1-&gt;6)-D-glucopyranosyl)-1,2-diacyl-sn-glycerol). Beta-diglucosyl-DAG is the predominant glycolipid found in Bacillales and is also used as a membrane anchor for lipoteichoic acid (LTA). This is Processive diacylglycerol beta-glucosyltransferase from Bacillus pumilus (strain SAFR-032).